Reading from the N-terminus, the 384-residue chain is N-acetylneuraminate epimerase (384 aa).

A signal peptide spans methionine 1–alanine 29. 7 Kelch repeats span residues valine 51 to asparagine 95, lysine 97 to asparagine 149, threonine 151 to tyrosine 184, asparagine 185 to asparagine 230, leucine 233 to alanine 282, glutamine 304 to aspartate 353, and valine 355 to lysine 384. Glutamate 239 serves as the catalytic Proton acceptor.

Belongs to the NanM family. Homodimer.

Its subcellular location is the periplasm. The enzyme catalyses N-acetyl-alpha-neuraminate = N-acetyl-beta-neuraminate. In terms of biological role, converts alpha-N-acetylneuranimic acid (Neu5Ac) to the beta-anomer, accelerating the equilibrium between the alpha- and beta-anomers. Probably facilitates sialidase-negative bacteria to compete successfully for limited amounts of extracellular Neu5Ac, which is likely taken up in the beta-anomer. In addition, the rapid removal of sialic acid from solution might be advantageous to the bacterium to damp down host responses. The polypeptide is N-acetylneuraminate epimerase (Salmonella typhi).